The chain runs to 357 residues: Protein-glutamate methylesterase/protein-glutamine glutaminase 1 (357 aa).

The Response regulatory domain occupies 7 to 124 (KVLCVDDSAL…REGLLDYTQT (118 aa)). Asp-58 carries the post-translational modification 4-aspartylphosphate. The CheB-type methylesterase domain occupies 158–350 (LLSTEKLIIV…QRVMAHLATF (193 aa)). Residues Ser-170, His-196, and Asp-292 contribute to the active site.

The protein belongs to the CheB family. Post-translationally, phosphorylated by CheA. Phosphorylation of the N-terminal regulatory domain activates the methylesterase activity.

Its subcellular location is the cytoplasm. It catalyses the reaction [protein]-L-glutamate 5-O-methyl ester + H2O = L-glutamyl-[protein] + methanol + H(+). The enzyme catalyses L-glutaminyl-[protein] + H2O = L-glutamyl-[protein] + NH4(+). In terms of biological role, involved in chemotaxis. Part of a chemotaxis signal transduction system that modulates chemotaxis in response to various stimuli. Catalyzes the demethylation of specific methylglutamate residues introduced into the chemoreceptors (methyl-accepting chemotaxis proteins or MCP) by CheR. Also mediates the irreversible deamidation of specific glutamine residues to glutamic acid. The polypeptide is Protein-glutamate methylesterase/protein-glutamine glutaminase 1 (Cupriavidus metallidurans (strain ATCC 43123 / DSM 2839 / NBRC 102507 / CH34) (Ralstonia metallidurans)).